A 55-amino-acid polypeptide reads, in one-letter code: DNA-binding protein (55 aa).

The tract at residues 1–55 is disordered; sequence MVYRRRRRSSTGTTYGSTRRRRSSGYRRRPGRPRTYRRSRSRSSTGRRSYRTRYY. Repeat copies occupy residues 5 to 10 and 19 to 24. The segment at 5–24 is 2 X 6 AA repeats of R-R-R-R-S-S; that stretch reads RRRRSSTGTTYGSTRRRRSS. Positions 18-41 are enriched in basic residues; the sequence is TRRRRSSGYRRRPGRPRTYRRSRS.

As to quaternary structure, interacts with protein AC132. Phosphorylated.

It is found in the virion. Its subcellular location is the host cytoplasm. In terms of biological role, plays a role in viral DNA packaging and nucleocapsid assembly. Promotes viral gene transcription during the late stage of infection while it is non-essential for the basal level of viral gene transcription. The chain is DNA-binding protein (P6.9) from Lepidoptera (butterflies and moths).